The chain runs to 356 residues: Peptide chain release factor 1 (356 aa).

The residue at position 233 (Gln-233) is an N5-methylglutamine.

The protein belongs to the prokaryotic/mitochondrial release factor family. Post-translationally, methylated by PrmC. Methylation increases the termination efficiency of RF1.

Its subcellular location is the cytoplasm. Functionally, peptide chain release factor 1 directs the termination of translation in response to the peptide chain termination codons UAG and UAA. This is Peptide chain release factor 1 from Oceanobacillus iheyensis (strain DSM 14371 / CIP 107618 / JCM 11309 / KCTC 3954 / HTE831).